We begin with the raw amino-acid sequence, 463 residues long: Chromosomal replication initiator protein DnaA (463 aa).

The domain I, interacts with DnaA modulators stretch occupies residues 1–90; it reads MSLSLWQQCL…KPLSQIISQT (90 aa). Residues 91-126 are domain II; the sequence is VTASVSAPSAPIVRVAAPSRPSWDNAAPQPELSYRS. Residues 127-343 are domain III, AAA+ region; sequence NVNPKHTFDN…GALNRVIANA (217 aa). 4 residues coordinate ATP: glycine 171, glycine 173, lysine 174, and threonine 175. Positions 344–463 are domain IV, binds dsDNA; sequence NFTGRAITID…FSNLIRTLSS (120 aa).

It belongs to the DnaA family. Oligomerizes as a right-handed, spiral filament on DNA at oriC.

It localises to the cytoplasm. Its function is as follows. Plays an essential role in the initiation and regulation of chromosomal replication. ATP-DnaA binds to the origin of replication (oriC) to initiate formation of the DNA replication initiation complex once per cell cycle. Binds the DnaA box (a 9 base pair repeat at the origin) and separates the double-stranded (ds)DNA. Forms a right-handed helical filament on oriC DNA; dsDNA binds to the exterior of the filament while single-stranded (ss)DNA is stabiized in the filament's interior. The ATP-DnaA-oriC complex binds and stabilizes one strand of the AT-rich DNA unwinding element (DUE), permitting loading of DNA polymerase. After initiation quickly degrades to an ADP-DnaA complex that is not apt for DNA replication. Binds acidic phospholipids. The chain is Chromosomal replication initiator protein DnaA from Serratia proteamaculans (strain 568).